A 433-amino-acid polypeptide reads, in one-letter code: Trigger factor (433 aa).

The 86-residue stretch at 161 to 246 (EDRVVIDFVG…LKKVENIVLP (86 aa)) folds into the PPIase FKBP-type domain.

The protein belongs to the FKBP-type PPIase family. Tig subfamily.

Its subcellular location is the cytoplasm. The enzyme catalyses [protein]-peptidylproline (omega=180) = [protein]-peptidylproline (omega=0). Its function is as follows. Involved in protein export. Acts as a chaperone by maintaining the newly synthesized protein in an open conformation. Functions as a peptidyl-prolyl cis-trans isomerase. This Actinobacillus pleuropneumoniae serotype 5b (strain L20) protein is Trigger factor.